Reading from the N-terminus, the 796-residue chain is Cadherin-11 (796 aa).

A signal peptide spans 1–24; sequence MKENYCLQAALVCLSMLYHSQAFA. Positions 25 to 53 are excised as a propeptide; that stretch reads LERRSHLHPSFHGHHEKGKEGQVLQRSKR. Cadherin domains are found at residues 54–159, 160–268, 269–383, 384–486, and 487–612; these read GWVW…PPEF, LHEI…PPKF, PQSV…PPMF, LAPS…DNAP, and KFAA…YILN. Residues 54–617 lie on the Extracellular side of the membrane; that stretch reads GWVWNQFFVI…AYILNAGLST (564 aa). Residues asparagine 455 and asparagine 540 are each glycosylated (N-linked (GlcNAc...) asparagine). The chain crosses the membrane as a helical span at residues 618-640; sequence GALIAILACIVILLVIVVLFVTL. Over 641–796 the chain is Cytoplasmic; sequence RRQKKEPLIV…GSKDTFDDDS (156 aa). Serine 788 bears the Phosphoserine mark. Phosphothreonine is present on threonine 791.

In terms of assembly, interacts with PCDH8. Selectively expressed in osteoblastic cell lines, precursor cell lines of osteoblasts, and primary osteoblastic cells from calvaria, as well as in lung, testis, and brain tissues at low levels.

The protein localises to the cell membrane. Functionally, cadherins are calcium-dependent cell adhesion proteins. They preferentially interact with themselves in a homophilic manner in connecting cells; cadherins may thus contribute to the sorting of heterogeneous cell types. Required for proper focal adhesion assembly. Involved in the regulation of cell migration. This chain is Cadherin-11 (Cdh11), found in Mus musculus (Mouse).